The following is a 302-amino-acid chain: Pathogenicity locus probable regulatory protein HrpS (302 aa).

The region spanning 9–237 is the Sigma-54 factor interaction domain; sequence DDLDAERVPN…LKAAAKRHVL (229 aa). ATP contacts are provided by residues 37 to 44 and 99 to 108; these read GETGTGKD and AQGGTLYLDE. Positions 279 to 298 form a DNA-binding region, H-T-H motif; that stretch reads IDAASLELDIPRRTLYRRIK.

Functionally, regulates the activation of the sigma factor HrpL which itself induces the expression of hprD as well as other hrp loci which are involved in plant pathogenicity, hrmA and avr genes. Probably interacts with sigma-54. In Pseudomonas syringae pv. syringae, this protein is Pathogenicity locus probable regulatory protein HrpS (hrpS).